The sequence spans 141 residues: Large ribosomal subunit protein uL11 (141 aa).

It belongs to the universal ribosomal protein uL11 family. As to quaternary structure, part of the ribosomal stalk of the 50S ribosomal subunit. Interacts with L10 and the large rRNA to form the base of the stalk. L10 forms an elongated spine to which L12 dimers bind in a sequential fashion forming a multimeric L10(L12)X complex. In terms of processing, one or more lysine residues are methylated.

Functionally, forms part of the ribosomal stalk which helps the ribosome interact with GTP-bound translation factors. This Cyanothece sp. (strain PCC 7425 / ATCC 29141) protein is Large ribosomal subunit protein uL11.